The primary structure comprises 277 residues: Shikimate dehydrogenase (NADP(+)) (277 aa).

Residues 17–19 (SRS) and threonine 64 each bind shikimate. The active-site Proton acceptor is lysine 68. 2 residues coordinate shikimate: asparagine 88 and aspartate 103. NADP(+) is bound by residues 128 to 132 (GAGGS) and leucine 217. Tyrosine 219 serves as a coordination point for shikimate. Glycine 240 contacts NADP(+).

Belongs to the shikimate dehydrogenase family. Homodimer.

It catalyses the reaction shikimate + NADP(+) = 3-dehydroshikimate + NADPH + H(+). It participates in metabolic intermediate biosynthesis; chorismate biosynthesis; chorismate from D-erythrose 4-phosphate and phosphoenolpyruvate: step 4/7. Involved in the biosynthesis of the chorismate, which leads to the biosynthesis of aromatic amino acids. Catalyzes the reversible NADPH linked reduction of 3-dehydroshikimate (DHSA) to yield shikimate (SA). The polypeptide is Shikimate dehydrogenase (NADP(+)) (Afipia carboxidovorans (strain ATCC 49405 / DSM 1227 / KCTC 32145 / OM5) (Oligotropha carboxidovorans)).